The following is a 527-amino-acid chain: DNA polymerase epsilon subunit 2 (527 aa).

The protein belongs to the DNA polymerase epsilon subunit B family. In terms of assembly, component of the DNA polymerase epsilon complex consisting of four subunits: the catalytic subunit POLE and the accessory subunits POLE2, POLE3 and POLE4.

The protein resides in the nucleus. Accessory component of the DNA polymerase epsilon complex. Participates in DNA repair and in chromosomal DNA replication. The chain is DNA polymerase epsilon subunit 2 from Homo sapiens (Human).